Consider the following 292-residue polypeptide: 4-diphosphocytidyl-2-C-methyl-D-erythritol kinase (292 aa).

Lysine 10 is a catalytic residue. 94–104 (PVAAGLAGGSS) lines the ATP pocket. The active site involves aspartate 136.

The protein belongs to the GHMP kinase family. IspE subfamily.

The enzyme catalyses 4-CDP-2-C-methyl-D-erythritol + ATP = 4-CDP-2-C-methyl-D-erythritol 2-phosphate + ADP + H(+). It functions in the pathway isoprenoid biosynthesis; isopentenyl diphosphate biosynthesis via DXP pathway; isopentenyl diphosphate from 1-deoxy-D-xylulose 5-phosphate: step 3/6. Its function is as follows. Catalyzes the phosphorylation of the position 2 hydroxy group of 4-diphosphocytidyl-2C-methyl-D-erythritol. This Brevibacillus brevis (strain 47 / JCM 6285 / NBRC 100599) protein is 4-diphosphocytidyl-2-C-methyl-D-erythritol kinase.